A 1822-amino-acid polypeptide reads, in one-letter code: ADP-ribosylation factor guanine nucleotide-exchange factor sec72 (1822 aa).

Disordered regions lie at residues 1-54 (MQDA…NGMD) and 66-126 (DAVV…RASL). Position 44 is a phosphoserine (serine 44). Polar residues predominate over residues 72-84 (DINTEDSSLSPAK). Residues 85-110 (QENEKSPEGIEQKYQEEDLKDDKKSN) show a composition bias toward basic and acidic residues. 2 positions are modified to phosphoserine: serine 122 and serine 125. Residues 547-551 (NYDCD) carry the HUS box motif. Threonine 597 carries the post-translational modification Phosphothreonine. Serine 653 bears the Phosphoserine mark. At threonine 654 the chain carries Phosphothreonine. A Phosphoserine modification is found at serine 669. The region spanning 701–889 (QFESNKQRKK…GFVYDDILKN (189 aa)) is the SEC7 domain. The tract at residues 898–1106 (ELAAIAPLMN…NARVRRKNVN (209 aa)) is HDS1 domain. The residue at position 1110 (serine 1110) is a Phosphoserine. 2 disordered regions span residues 1111-1131 (NSIR…SLSK) and 1584-1610 (ENEN…TSSI). Low complexity-rich tracts occupy residues 1117 to 1130 (SGST…RSLS) and 1597 to 1610 (SLPE…TSSI). Phosphoserine is present on residues serine 1606 and serine 1609.

It localises to the cytoplasm. Its subcellular location is the golgi apparatus. It is found in the trans-Golgi network. The protein resides in the cytoplasmic vesicle. The protein localises to the COPI-coated vesicle membrane. It localises to the COPII-coated vesicle membrane. In terms of biological role, guanine exchange factor that acts as an activator of arf1 at the trans-Golgi net-work and is thus involved in vesicular budding and traffic between compartments of the Golgi apparatus. Activation of Arf (ADP-ribosylation factor) GTPases is essential for vesicle formation via recruitment of cargo adapters and coat proteins necessary for Golgi trafficking. Involved in the resistance to tamoxifen (TAM), an anticancer drug used to treat estrogen receptor (ER)-positive breast cancer. In Schizosaccharomyces pombe (strain 972 / ATCC 24843) (Fission yeast), this protein is ADP-ribosylation factor guanine nucleotide-exchange factor sec72.